The following is a 149-amino-acid chain: Deoxyuridine 5'-triphosphate nucleotidohydrolase (149 aa).

Substrate contacts are provided by residues Arg-65 to Gly-67, Asn-78, Thr-82 to Asp-84, and Lys-92.

It belongs to the dUTPase family. Mg(2+) serves as cofactor.

The enzyme catalyses dUTP + H2O = dUMP + diphosphate + H(+). It participates in pyrimidine metabolism; dUMP biosynthesis; dUMP from dCTP (dUTP route): step 2/2. Functionally, this enzyme is involved in nucleotide metabolism: it produces dUMP, the immediate precursor of thymidine nucleotides and it decreases the intracellular concentration of dUTP so that uracil cannot be incorporated into DNA. The polypeptide is Deoxyuridine 5'-triphosphate nucleotidohydrolase (Chlorobium chlorochromatii (strain CaD3)).